The following is a 269-amino-acid chain: Prespore protein Dd31 (269 aa).

Polar residues predominate over residues 1-17; it reads MEHNNNPGTPQMSSEFP. The interval 1–35 is disordered; it reads MEHNNNPGTPQMSSEFPASTTQTSSSAAAYDNSSH. Over residues 18–29 the composition is skewed to low complexity; the sequence is ASTTQTSSSAAA. 4 consecutive transmembrane segments (helical) span residues 111–131, 139–159, 177–197, and 225–245; these read FGIFVFLWEAAALVYNWVVSI, VDNFFLALFYMIVGVPTLYFL, YAYLMALLGVVLFNIIFFVGF, and VSLFFWFVGVFLTIALFIMYL.

Belongs to the SCAMP family.

It localises to the membrane. Its subcellular location is the spore coat. The sequence is that of Prespore protein Dd31 (spiA) from Dictyostelium discoideum (Social amoeba).